A 417-amino-acid polypeptide reads, in one-letter code: Divinyl chlorophyllide a 8-vinyl-reductase, chloroplastic (417 aa).

The N-terminal 49 residues, 1–49 (MSLCSSFNVFASYSPKPKTIFKDSKFISQFQVKSSPLASTFHTNESSTS), are a transit peptide targeting the chloroplast.

Highly expressed in leaves, stems and flower buds. Detected in roots.

It is found in the plastid. The protein resides in the chloroplast. The catalysed reaction is protochlorophyllide a + NADP(+) = 3,8-divinyl protochlorophyllide a + NADPH + H(+). It participates in porphyrin-containing compound metabolism; chlorophyll biosynthesis. Its function is as follows. Catalyzes the conversion of divinyl chlorophyllide to monovinyl chlorophyllide. Reduces the 8-vinyl group of the tetrapyrrole to an ethyl group using NADPH as the reductant. The best substrate is (3,8-divinyl)-chlorophyllide a (DV-Chlidea). Very low activity with (3,8-divinyl)-protochlorophyllide a (DV-Pchlidea) and (3,8-divinyl)-magnesium-protoporphyrin IX monomethyl ester (DV-MPE). No activity with (3,8-divinyl)-chlorophyllide b (DV-Chlideb), (3,8-divinyl)-magnesium-protoporphyrin IX (DV-Mg-Proto) and either (3,8-divinyl)-chlorophyll a (DV-Chla) or b (DV-Chlb). This chain is Divinyl chlorophyllide a 8-vinyl-reductase, chloroplastic (DVR), found in Arabidopsis thaliana (Mouse-ear cress).